We begin with the raw amino-acid sequence, 491 residues long: Glutathione synthetase GSH2 (491 aa).

Arginine 128 contacts substrate. Glutamate 146 contributes to the ATP binding site. Glutamate 146 and asparagine 148 together coordinate Mg(2+). Residues 150 to 153 (VSVS), 228 to 230 (ERN), glutamine 234, and 285 to 288 (RTGY) each bind substrate. Residues lysine 324, 382-391 (KPQREGGGNN), tyrosine 393, 415-418 (MELI), and glutamate 442 each bind ATP. Residue glutamate 386 coordinates Mg(2+). Arginine 467 provides a ligand contact to substrate. ATP is bound by residues lysine 469 and glutamate 475. Substrate is bound at residue 478–479 (VA).

This sequence belongs to the eukaryotic GSH synthase family. In terms of assembly, homodimer. Mg(2+) serves as cofactor.

It catalyses the reaction gamma-L-glutamyl-L-cysteine + glycine + ATP = glutathione + ADP + phosphate + H(+). It functions in the pathway sulfur metabolism; glutathione biosynthesis; glutathione from L-cysteine and L-glutamate: step 2/2. This Saccharomyces cerevisiae (strain ATCC 204508 / S288c) (Baker's yeast) protein is Glutathione synthetase GSH2 (GSH2).